Consider the following 196-residue polypeptide: Phosphoheptose isomerase (196 aa).

Positions 38–196 constitute an SIS domain; it reads LIAGYRAGAR…VEHALFAPRQ (159 aa). Residue 53–55 coordinates substrate; it reads NGG. 2 residues coordinate Zn(2+): H62 and E66. Residues E66, 95–96, 121–123, S126, and Q173 each bind substrate; these read ND and STS. Zn(2+) contacts are provided by Q173 and H181.

It belongs to the SIS family. GmhA subfamily. Zn(2+) is required as a cofactor.

Its subcellular location is the cytoplasm. The enzyme catalyses 2 D-sedoheptulose 7-phosphate = D-glycero-alpha-D-manno-heptose 7-phosphate + D-glycero-beta-D-manno-heptose 7-phosphate. Its pathway is carbohydrate biosynthesis; D-glycero-D-manno-heptose 7-phosphate biosynthesis; D-glycero-alpha-D-manno-heptose 7-phosphate and D-glycero-beta-D-manno-heptose 7-phosphate from sedoheptulose 7-phosphate: step 1/1. Functionally, catalyzes the isomerization of sedoheptulose 7-phosphate in D-glycero-D-manno-heptose 7-phosphate. The chain is Phosphoheptose isomerase from Mycobacterium bovis (strain ATCC BAA-935 / AF2122/97).